Here is a 647-residue protein sequence, read N- to C-terminus: Denticleless protein homolog (647 aa).

7 WD repeats span residues 48–88, 95–134, 137–177, 209–248, 264–303, 308–349, and 353–393; these read AAAV…KQSS, AHDN…LLGT, GHQC…KDGF, DSQQ…TAYH, TRKL…TTPV, GHSN…QAPM, and GHSQ…EGEN. Short sequence motifs (DDB1-binding motif) lie at residues 167 to 170 and 238 to 241; these read WDTR and WDLR. Disordered stretches follow at residues 410-487 and 534-647; these read QSPN…SKSP and KRSR…RTQD. 2 stretches are compositionally biased toward polar residues: residues 426 to 443 and 471 to 486; these read PSKN…SPQP and KMPS…SSKS. Over residues 543–558 the composition is skewed to basic and acidic residues; sequence LKKEDSFGLESEKRLG. Positions 586–600 are enriched in low complexity; sequence KGSAQPKSPSSGSSQ.

The protein belongs to the WD repeat cdt2 family. Component of the DCX(DTL) E3 ubiquitin ligase complex, at least composed of cul4 (cul4a or cul4b), ddb1, dtl/cdt2 and rbx1.

It is found in the nucleus. It localises to the cytoplasm. The protein resides in the cytoskeleton. The protein localises to the microtubule organizing center. Its subcellular location is the centrosome. It is found in the chromosome. The protein operates within protein modification; protein ubiquitination. In terms of biological role, substrate-specific adapter of a DCX (DDB1-CUL4-X-box) E3 ubiquitin-protein ligase complex required for cell cycle control, DNA damage response and translesion DNA synthesis. The DCX(DTL) complex, also named CRL4(CDT2) complex, mediates the polyubiquitination and subsequent degradation of CDT1, CDKN1A/p21(CIP1), KMT5A and SDE2. CDT1 degradation in response to DNA damage is necessary to ensure proper cell cycle regulation of DNA replication. CDKN1A/p21(CIP1) degradation during S phase or following UV irradiation is essential to control replication licensing. KMT5A degradation is also important for a proper regulation of mechanisms such as TGF-beta signaling, cell cycle progression, DNA repair and cell migration. Most substrates require their interaction with PCNA for their polyubiquitination: substrates interact with PCNA via their PIP-box, and those containing the 'K+4' motif in the PIP box, recruit the DCX(DTL) complex, leading to their degradation. In undamaged proliferating cells, the DCX(DTL) complex also promotes the 'Lys-164' monoubiquitination of PCNA, thereby being involved in PCNA-dependent translesion DNA synthesis. May play a role in the regulation of the circadian clock. The polypeptide is Denticleless protein homolog (dtl) (Danio rerio (Zebrafish)).